We begin with the raw amino-acid sequence, 445 residues long: Putative ATP-dependent RNA helicase L538 (445 aa).

The 138-residue stretch at 14 to 151 folds into the Helicase ATP-binding domain; sequence IEFMKNNRGV…AVLVNIVRGE (138 aa). Residue 27–34 participates in ATP binding; sequence HSTGAGKT. The DEAH box motif lies at 101–104; the sequence is DEAH. One can recognise a Helicase C-terminal domain in the interval 273-442; it reads KIEDIMKYII…VIDASIENNY (170 aa).

Belongs to the DEAD box helicase family. DEAH subfamily.

The protein resides in the virion. The enzyme catalyses ATP + H2O = ADP + phosphate + H(+). The chain is Putative ATP-dependent RNA helicase L538 from Acanthamoeba polyphaga mimivirus (APMV).